Consider the following 294-residue polypeptide: 4-hydroxy-tetrahydrodipicolinate synthase (294 aa).

Thr47 is a binding site for pyruvate. The active-site Proton donor/acceptor is the Tyr135. Lys163 (schiff-base intermediate with substrate) is an active-site residue. Thr205 provides a ligand contact to pyruvate.

This sequence belongs to the DapA family. In terms of assembly, homotetramer; dimer of dimers.

It localises to the cytoplasm. It catalyses the reaction L-aspartate 4-semialdehyde + pyruvate = (2S,4S)-4-hydroxy-2,3,4,5-tetrahydrodipicolinate + H2O + H(+). The protein operates within amino-acid biosynthesis; L-lysine biosynthesis via DAP pathway; (S)-tetrahydrodipicolinate from L-aspartate: step 3/4. Functionally, catalyzes the condensation of (S)-aspartate-beta-semialdehyde [(S)-ASA] and pyruvate to 4-hydroxy-tetrahydrodipicolinate (HTPA). This Rickettsia montanensis protein is 4-hydroxy-tetrahydrodipicolinate synthase.